Reading from the N-terminus, the 222-residue chain is Abasic site processing protein YedK (222 aa).

Residue C2 is the Nucleophile of the active site. Position 2 is a thiazolidine linkage to a ring-opened DNA abasic site (C2). E105 is a catalytic residue.

This sequence belongs to the SOS response-associated peptidase family.

Formation and reversal of DNA-protein cross-link depends on DNA context. Catalyzes formation of the thiazolidine linkage in presence of abasic sites in single-stranded DNA. Mediates the reversal of the thiazolidine cross-link in presence of double stranded DNA. Its function is as follows. Sensor of abasic sites in single-stranded DNA (ssDNA) required to preserve genome integrity by promoting error-free repair of abasic sites. Recognizes and binds abasic sites in ssDNA at replication forks and chemically modifies the lesion by forming a covalent cross-link with DNA: forms a stable thiazolidine linkage between a ring-opened abasic site and the alpha-amino and sulfhydryl substituents of its N-terminal catalytic cysteine residue. The DNA-protein cross-link is then reversed: able to catalyze the reversal of the thiazolidine cross-link and cycle between a cross-link and a non-cross-linked state depending on DNA context: mediates self-reversal of the thiazolidine cross-link in double stranded DNA. May act as a protease: mediates autocatalytic processing of its N-terminal methionine in order to expose the catalytic cysteine. This is Abasic site processing protein YedK from Escherichia coli (strain K12).